We begin with the raw amino-acid sequence, 310 residues long: tRNA dimethylallyltransferase (310 aa).

Gly-9–Thr-16 provides a ligand contact to ATP. Residue Thr-11–Thr-16 participates in substrate binding. The interval Asp-34–Gln-37 is interaction with substrate tRNA.

This sequence belongs to the IPP transferase family. In terms of assembly, monomer. Requires Mg(2+) as cofactor.

The catalysed reaction is adenosine(37) in tRNA + dimethylallyl diphosphate = N(6)-dimethylallyladenosine(37) in tRNA + diphosphate. In terms of biological role, catalyzes the transfer of a dimethylallyl group onto the adenine at position 37 in tRNAs that read codons beginning with uridine, leading to the formation of N6-(dimethylallyl)adenosine (i(6)A). The protein is tRNA dimethylallyltransferase of Pediococcus pentosaceus (strain ATCC 25745 / CCUG 21536 / LMG 10740 / 183-1w).